A 196-amino-acid chain; its full sequence is GTP cyclohydrolase-2 (196 aa).

49–53 lines the GTP pocket; sequence RVHSE. Positions 54, 65, and 67 each coordinate Zn(2+). Residues glutamine 70, 92–94, and threonine 114 contribute to the GTP site; that span reads EGR. The active-site Proton acceptor is aspartate 126. The Nucleophile role is filled by arginine 128. GTP is bound by residues threonine 149 and lysine 154.

The protein belongs to the GTP cyclohydrolase II family. Homodimer. It depends on Zn(2+) as a cofactor.

The catalysed reaction is GTP + 4 H2O = 2,5-diamino-6-hydroxy-4-(5-phosphoribosylamino)-pyrimidine + formate + 2 phosphate + 3 H(+). It functions in the pathway cofactor biosynthesis; riboflavin biosynthesis; 5-amino-6-(D-ribitylamino)uracil from GTP: step 1/4. Functionally, catalyzes the conversion of GTP to 2,5-diamino-6-ribosylamino-4(3H)-pyrimidinone 5'-phosphate (DARP), formate and pyrophosphate. The chain is GTP cyclohydrolase-2 from Yersinia pestis.